The primary structure comprises 62 residues: Large ribosomal subunit protein bL32 (62 aa).

This sequence belongs to the bacterial ribosomal protein bL32 family.

The polypeptide is Large ribosomal subunit protein bL32 (rpmF) (Treponema pallidum (strain Nichols)).